Here is a 459-residue protein sequence, read N- to C-terminus: Cysteine--tRNA ligase (459 aa).

Cys-31 serves as a coordination point for Zn(2+). A 'HIGH' region motif is present at residues 33-43 (PTVYYNPHIGN). Residues Cys-216, His-241, and Glu-245 each coordinate Zn(2+). Positions 274–278 (KMSKS) match the 'KMSKS' region motif. Lys-277 contributes to the ATP binding site.

Belongs to the class-I aminoacyl-tRNA synthetase family. As to quaternary structure, monomer. It depends on Zn(2+) as a cofactor.

It is found in the cytoplasm. It catalyses the reaction tRNA(Cys) + L-cysteine + ATP = L-cysteinyl-tRNA(Cys) + AMP + diphosphate. This is Cysteine--tRNA ligase from Rickettsia conorii (strain ATCC VR-613 / Malish 7).